Here is a 253-residue protein sequence, read N- to C-terminus: Phosphoadenosine 5'-phosphosulfate reductase (253 aa).

C242 serves as the catalytic Nucleophile; cysteine thiosulfonate intermediate.

It belongs to the PAPS reductase family. CysH subfamily.

It is found in the cytoplasm. It carries out the reaction [thioredoxin]-disulfide + sulfite + adenosine 3',5'-bisphosphate + 2 H(+) = [thioredoxin]-dithiol + 3'-phosphoadenylyl sulfate. It functions in the pathway sulfur metabolism; hydrogen sulfide biosynthesis; sulfite from sulfate: step 3/3. Catalyzes the formation of sulfite from phosphoadenosine 5'-phosphosulfate (PAPS) using thioredoxin as an electron donor. This Vibrio cholerae serotype O1 (strain ATCC 39541 / Classical Ogawa 395 / O395) protein is Phosphoadenosine 5'-phosphosulfate reductase.